The primary structure comprises 98 residues: Guanine nucleotide-binding protein subunit gamma 1 (98 aa).

Positions 19-98 (GKHRILAELA…GGEGCRCLIL (80 aa)) constitute a G protein gamma domain. Residues 20–50 (KHRILAELARVEQEVAFLEKELKEVENTDIV) are a coiled coil. The regulates lipidation and cell membrane subcellular localization stretch occupies residues 88-94 (NGGEGCR). C93 carries the S-palmitoyl cysteine lipid modification. C95 bears the Cysteine methyl ester mark. C95 carries S-farnesyl cysteine lipidation. A propeptide spans 96–98 (LIL) (removed in mature form).

As to quaternary structure, g proteins are composed of 3 units, alpha, beta and gamma. Interacts with the beta subunit GB1. The dimer GB1-GG1 interacts with NDL1, NDL2 and NDL3. Binds to NUDT7. As to expression, mostly expressed in seedlings (especially at the hypocotyl/root junction), young cauline leaves, open flowers, and floral stems, and, to a lower extent, in roots (restricted to the stele), rosette leaves (restricted to veins), siliques, and unopened floral buds. Also present in hydathods.

Its subcellular location is the cell membrane. It localises to the golgi apparatus membrane. The protein resides in the golgi apparatus. The protein localises to the trans-Golgi network membrane. It is found in the cytoplasm. Guanine nucleotide-binding proteins (G proteins) are involved as a modulator or transducer in various transmembrane signaling systems. The beta and gamma chains are required for the GTPase activity, for replacement of GDP by GTP, and for G protein-effector interaction. Involved in the abscisic acid (ABA) and ethylene signaling pathways. Regulates acropetal transport of auxin (IAA) in roots and hypocotyls, and thus modulates root architecture (e.g. lateral root formation). The heterotrimeric G-protein controls defense responses to necrotrophic and vascular fungi probably by modulating cell wall-related genes expression; involved in resistance to fungal pathogens such as Alternaria brassicicola, Plectosphaerella cucumerina and Fusarium oxysporum. This is Guanine nucleotide-binding protein subunit gamma 1 (GG1) from Arabidopsis thaliana (Mouse-ear cress).